Reading from the N-terminus, the 298-residue chain is Putative S-adenosyl-L-methionine-dependent methyltransferase MSMEG_1480/MSMEI_1444 (298 aa).

S-adenosyl-L-methionine is bound by residues Asp127 and 156–157 (DL).

The protein belongs to the UPF0677 family.

Its function is as follows. Exhibits S-adenosyl-L-methionine-dependent methyltransferase activity. This Mycolicibacterium smegmatis (strain ATCC 700084 / mc(2)155) (Mycobacterium smegmatis) protein is Putative S-adenosyl-L-methionine-dependent methyltransferase MSMEG_1480/MSMEI_1444.